A 205-amino-acid polypeptide reads, in one-letter code: Dephospho-CoA kinase (205 aa).

A DPCK domain is found at 7–204; it reads LVGLTGGIGS…ARYLAAARAT (198 aa). Residue 15–20 coordinates ATP; it reads GSGKSA.

The protein belongs to the CoaE family.

The protein localises to the cytoplasm. The enzyme catalyses 3'-dephospho-CoA + ATP = ADP + CoA + H(+). The protein operates within cofactor biosynthesis; coenzyme A biosynthesis; CoA from (R)-pantothenate: step 5/5. In terms of biological role, catalyzes the phosphorylation of the 3'-hydroxyl group of dephosphocoenzyme A to form coenzyme A. In Aromatoleum aromaticum (strain DSM 19018 / LMG 30748 / EbN1) (Azoarcus sp. (strain EbN1)), this protein is Dephospho-CoA kinase.